Reading from the N-terminus, the 188-residue chain is Protein-export protein SecB (188 aa).

Disordered stretches follow at residues 1–21 (MADE…EQPK) and 160–188 (RQKA…DTQQ). The segment covering 176–188 (SDSTAAQGSDTQQ) has biased composition (polar residues).

The protein belongs to the SecB family. In terms of assembly, homotetramer, a dimer of dimers. One homotetramer interacts with 1 SecA dimer.

It is found in the cytoplasm. In terms of biological role, one of the proteins required for the normal export of preproteins out of the cell cytoplasm. It is a molecular chaperone that binds to a subset of precursor proteins, maintaining them in a translocation-competent state. It also specifically binds to its receptor SecA. The chain is Protein-export protein SecB from Alkalilimnicola ehrlichii (strain ATCC BAA-1101 / DSM 17681 / MLHE-1).